Here is a 510-residue protein sequence, read N- to C-terminus: GMP synthase [glutamine-hydrolyzing] (510 aa).

A Glutamine amidotransferase type-1 domain is found at 5–195; that stretch reads LVIVLDFGGQ…LFNIADLSAD (191 aa). Cysteine 82 functions as the Nucleophile in the catalytic mechanism. Active-site residues include histidine 169 and glutamate 171. Residues 196-385 enclose the GMPS ATP-PPase domain; sequence WTMGSYIEET…LGLHREIVER (190 aa). Position 223 to 229 (223 to 229) interacts with ATP; that stretch reads SGGIDST.

As to quaternary structure, homodimer.

The enzyme catalyses XMP + L-glutamine + ATP + H2O = GMP + L-glutamate + AMP + diphosphate + 2 H(+). Its pathway is purine metabolism; GMP biosynthesis; GMP from XMP (L-Gln route): step 1/1. Functionally, catalyzes the synthesis of GMP from XMP. The protein is GMP synthase [glutamine-hydrolyzing] of Natranaerobius thermophilus (strain ATCC BAA-1301 / DSM 18059 / JW/NM-WN-LF).